A 605-amino-acid polypeptide reads, in one-letter code: Isocitrate dehydrogenase kinase/phosphatase (605 aa).

ATP-binding positions include Ala327–Leu333 and Lys348. The active site involves Asp383.

The protein belongs to the AceK family.

The protein resides in the cytoplasm. It catalyses the reaction L-seryl-[isocitrate dehydrogenase] + ATP = O-phospho-L-seryl-[isocitrate dehydrogenase] + ADP + H(+). Bifunctional enzyme which can phosphorylate or dephosphorylate isocitrate dehydrogenase (IDH) on a specific serine residue. This is a regulatory mechanism which enables bacteria to bypass the Krebs cycle via the glyoxylate shunt in response to the source of carbon. When bacteria are grown on glucose, IDH is fully active and unphosphorylated, but when grown on acetate or ethanol, the activity of IDH declines drastically concomitant with its phosphorylation. This is Isocitrate dehydrogenase kinase/phosphatase from Burkholderia lata (strain ATCC 17760 / DSM 23089 / LMG 22485 / NCIMB 9086 / R18194 / 383).